Reading from the N-terminus, the 89-residue chain is Small ribosomal subunit protein uS19 (89 aa).

It belongs to the universal ribosomal protein uS19 family.

Its function is as follows. Protein S19 forms a complex with S13 that binds strongly to the 16S ribosomal RNA. This chain is Small ribosomal subunit protein uS19, found in Stenotrophomonas maltophilia (strain K279a).